Reading from the N-terminus, the 190-residue chain is MIVGVVDYTVGNIGSVLTALKRAGAVPVVVKGVEEAGRVDAVVLPGVGTYEAAYALARQFKEVVLEKPTLAICLGMQLLFESSEEGGGQGLGVFKGRVERIKARKVPNIGWRYTHVVKNSEIIAEGYYYYLHSYGVRWGENEAYTAYIKLEEKYVAAVERGHIIGVQFHPERSGRTGLELIKRFLAVAKR.

Residues 2-190 (IVGVVDYTVG…IKRFLAVAKR (189 aa)) enclose the Glutamine amidotransferase type-1 domain. The active-site Nucleophile is the cysteine 73. Residues histidine 169 and glutamate 171 contribute to the active site.

In terms of assembly, heterodimer of HisH and HisF.

Its subcellular location is the cytoplasm. It carries out the reaction 5-[(5-phospho-1-deoxy-D-ribulos-1-ylimino)methylamino]-1-(5-phospho-beta-D-ribosyl)imidazole-4-carboxamide + L-glutamine = D-erythro-1-(imidazol-4-yl)glycerol 3-phosphate + 5-amino-1-(5-phospho-beta-D-ribosyl)imidazole-4-carboxamide + L-glutamate + H(+). The enzyme catalyses L-glutamine + H2O = L-glutamate + NH4(+). It functions in the pathway amino-acid biosynthesis; L-histidine biosynthesis; L-histidine from 5-phospho-alpha-D-ribose 1-diphosphate: step 5/9. In terms of biological role, IGPS catalyzes the conversion of PRFAR and glutamine to IGP, AICAR and glutamate. The HisH subunit catalyzes the hydrolysis of glutamine to glutamate and ammonia as part of the synthesis of IGP and AICAR. The resulting ammonia molecule is channeled to the active site of HisF. This chain is Imidazole glycerol phosphate synthase subunit HisH, found in Pyrobaculum aerophilum (strain ATCC 51768 / DSM 7523 / JCM 9630 / CIP 104966 / NBRC 100827 / IM2).